The sequence spans 542 residues: Homeobox and leucine zipper protein Homez (542 aa).

A DNA-binding region (homeobox 1) is located at residues 55 to 114 (WTQAIQTSELDGNEHLLQAFSYFPYPSLADIALLCLRHGLQMEKVKTWFMAQRLRCGISW). The tract at residues 165-193 (LSPLAPSEQPTHMKGLKVEPEEPSQVSQL) is disordered. Residues K181 and K201 each participate in a glycyl lysine isopeptide (Lys-Gly) (interchain with G-Cter in SUMO2) cross-link. A disordered region spans residues 250–307 (VHQPDKPASVSLLDNSCKEESEPSGIPPSSSTSSPSFQALANGTTATPKPLQPLGCIS). The span at 272-285 (PSGIPPSSSTSSPS) shows a compositional bias: low complexity. Residues 286-296 (FQALANGTTAT) show a composition bias toward polar residues. Residue S345 is modified to Phosphoserine. 2 DNA-binding regions (homeobox) span residues 349–409 (QHQR…KHGQ) and 443–502 (TPPL…AEVV). The short motif at 352–357 (RKTKRK) is the Nuclear localization signal element. Disordered stretches follow at residues 424-454 (FQDP…PPPD) and 501-542 (VVVC…IIWD). Residue T443 is modified to Phosphothreonine. A compositionally biased stretch (pro residues) spans 444–454 (PPLPAPPPPPD). A compositionally biased stretch (acidic residues) spans 505 to 542 (LDEEDEEDEEDELPEDGEEEEEEEEDDDDGDDDVIIWD).

As to quaternary structure, homodimer or heterodimer (Potential). Interacts with HOXC8. Ubiquitous. Strongly expressed in testis.

It localises to the nucleus. May function as a transcriptional regulator. This Mus musculus (Mouse) protein is Homeobox and leucine zipper protein Homez (Homez).